We begin with the raw amino-acid sequence, 227 residues long: Prolactin-4A1 (227 aa).

An N-terminal signal peptide occupies residues 1–31; it reads MHLSLTPQWSSWTVLLLLVSNLLLWENTASA. Intrachain disulfides connect Cys-87–Cys-203 and Cys-220–Cys-227. A glycan (N-linked (GlcNAc...) asparagine) is linked at Asn-175.

The protein belongs to the somatotropin/prolactin family. In terms of tissue distribution, expressed specifically in placenta. Expressed in both trophoblast giant cells and spongiotrophoblast cells.

The protein localises to the secreted. The sequence is that of Prolactin-4A1 (Prl4a1) from Mus musculus (Mouse).